The following is a 382-amino-acid chain: Queuine tRNA-ribosyltransferase (382 aa).

The Proton acceptor role is filled by Asp-96. Substrate-binding positions include 96–100 (DSGGF), Asp-151, Gln-194, and Gly-221. The tract at residues 252 to 258 (GVGAPDS) is RNA binding. The active-site Nucleophile is Asp-271. The RNA binding; important for wobble base 34 recognition stretch occupies residues 276–280 (TRIAR). The Zn(2+) site is built by Cys-309, Cys-311, Cys-314, and His-340.

It belongs to the queuine tRNA-ribosyltransferase family. In terms of assembly, homodimer. Within each dimer, one monomer is responsible for RNA recognition and catalysis, while the other monomer binds to the replacement base PreQ1. Requires Zn(2+) as cofactor.

It catalyses the reaction 7-aminomethyl-7-carbaguanine + guanosine(34) in tRNA = 7-aminomethyl-7-carbaguanosine(34) in tRNA + guanine. The protein operates within tRNA modification; tRNA-queuosine biosynthesis. Functionally, catalyzes the base-exchange of a guanine (G) residue with the queuine precursor 7-aminomethyl-7-deazaguanine (PreQ1) at position 34 (anticodon wobble position) in tRNAs with GU(N) anticodons (tRNA-Asp, -Asn, -His and -Tyr). Catalysis occurs through a double-displacement mechanism. The nucleophile active site attacks the C1' of nucleotide 34 to detach the guanine base from the RNA, forming a covalent enzyme-RNA intermediate. The proton acceptor active site deprotonates the incoming PreQ1, allowing a nucleophilic attack on the C1' of the ribose to form the product. After dissociation, two additional enzymatic reactions on the tRNA convert PreQ1 to queuine (Q), resulting in the hypermodified nucleoside queuosine (7-(((4,5-cis-dihydroxy-2-cyclopenten-1-yl)amino)methyl)-7-deazaguanosine). The chain is Queuine tRNA-ribosyltransferase from Lactococcus lactis subsp. cremoris (strain MG1363).